A 365-amino-acid polypeptide reads, in one-letter code: Protein dbl-1 (365 aa).

The signal sequence occupies residues 1–42 (MNDSVRTTTTISSTKSLVHSFQLSAILHLFLLISFTPMSAAA). The propeptide occupies 43–244 (DQHASHATRR…KRSAQTGNSE (202 aa)). Asparagine 110, asparagine 143, and asparagine 167 each carry an N-linked (GlcNAc...) asparagine glycan. Positions 231–259 (SVRRKRSAQTGNSERKNRKKGRKHHNTEA) are disordered. The span at 246-255 (KNRKKGRKHH) shows a compositional bias: basic residues. 3 disulfides stabilise this stretch: cysteine 264–cysteine 330, cysteine 293–cysteine 362, and cysteine 297–cysteine 364. N-linked (GlcNAc...) asparagine glycosylation occurs at asparagine 306.

This sequence belongs to the TGF-beta family. As to quaternary structure, homodimer; disulfide-linked. Interacts with drag-1. Expressed in embryos just prior to hatching and remains constant in most cells throughout the larval and adult stages. Expressed by AVA command interneurons.

The protein resides in the secreted. In terms of biological role, ligand for the serine/threonine-protein kinase receptor type-1 sma-6 which activates a TGF-beta-like signaling pathway. Multifunctional protein that is involved in body size, male ectodermal patterning, innate immunity, lipid metabolism and neural plasticity. Dose-dependent regulator of body size, probably influencing the sizes of some or all cells rather than their number. Plays a role in patterning of male-specific genital sensilla (simple sense organs), known as rays, and mating-associated structures, spicules. Plays a protective role in response to infection by the Gram-negative bacterium S.marcescens, by activating expression of genes involved in innate immunity. Regulator of lipid homeostasis, acting non cell-autonomously in the hypodermis; partly dependent on the Insulin/IGF-1-like signaling (IIS) mediated pathway. Required for aversive olfactory learning of pathogenic bacteria in adults. Involved in gland cell morphology, possibly via activation of a Smad-independent TGF-beta signaling pathway. Required to oppose the autoregulation of expression of Runt-related transcription factor rnt-1. The sequence is that of Protein dbl-1 from Caenorhabditis elegans.